The following is a 641-amino-acid chain: Sodium-dependent nutrient amino acid transporter 1 (641 aa).

The tract at residues 1-34 is disordered; sequence MELKGVQPSNGSANGNGTTNAASTEKADTEKQTA. At 1-38 the chain is on the cytoplasmic side; that stretch reads MELKGVQPSNGSANGNGTTNAASTEKADTEKQTAERTN. Low complexity predominate over residues 9–24; sequence SNGSANGNGTTNAAST. Residues 25 to 34 show a composition bias toward basic and acidic residues; the sequence is EKADTEKQTA. 3 helical membrane passes run 39–59, 72–92, and 109–129; these read WGNG…LGNV, GAFL…MYYL, and SVVP…ICII. Residues Asn-183 and Asn-188 are each glycosylated (N-linked (GlcNAc...) asparagine). A run of 9 helical transmembrane segments spans residues 229-249, 258-278, 307-327, 341-361, 401-421, 441-461, 474-494, 516-536, and 552-572; these read PDWK…LVIM, AAYF…IRAV, AVVQ…MFAS, IVTT…FAIL, LFSV…IVAL, VALI…TPGG, TYVV…VYGL, CWSF…MATI, and IAGW…GLWY.

Belongs to the sodium:neurotransmitter symporter (SNF) (TC 2.A.22) family.

It is found in the membrane. Unusual broad substrate spectrum amino acid:sodium cotransporter that promotes absorption of the D isomers of essential amino acids. Neutral amino acids are the preferred substrates, especially methionine and phenylalanine. The sequence is that of Sodium-dependent nutrient amino acid transporter 1 from Drosophila yakuba (Fruit fly).